The primary structure comprises 392 residues: Adenosine 3'-phospho 5'-phosphosulfate transporter 2 (392 aa).

The segment at 11–35 (NINGSASGQQAPTSNSPTLTRKSSS) is disordered. 10 consecutive transmembrane segments (helical) span residues 62 to 82 (CAGVFILYILYGYLQELIFTV), 87 to 107 (PFGWFLTLVQFGYYIGFGLVE), 136 to 156 (LVLAALTLGTMGLSNSSLGYL), 159 to 179 (PTQVIFKCCKLIPVLVGSILI), 185 to 205 (GPLDFAAASCMCIGLAWFTLA), 212 to 232 (NFNLLGVAMISGALLCDAAIG), 249 to 269 (VVFYSYGLGFVYLFVIMLVTG), 286 to 306 (FGYGFLFSLSGYLGIQFVLAL), 314 to 334 (IAATVTTARKAVTIAFSFVLF), and 338 to 358 (FTVQYLWSGLIVVLGIYLNVY).

It belongs to the nucleotide-sugar transporter family. SLC35B subfamily.

It localises to the golgi apparatus membrane. Its function is as follows. Mediates the transport of adenosine 3'-phospho 5'-phosphosulfate (PAPS), from cytosol into Golgi. PAPS is a universal sulfuryl donor for sulfation events that take place in the Golgi. Essential for viability. Involved in glycosaminoglycan synthesis and the subsequent signaling. May be involved in hh and dpp signaling by controlling the sulfation of heparan sulfate (HS). The protein is Adenosine 3'-phospho 5'-phosphosulfate transporter 2 of Drosophila pseudoobscura pseudoobscura (Fruit fly).